A 98-amino-acid polypeptide reads, in one-letter code: Large ribosomal subunit protein uL23 (98 aa).

The protein belongs to the universal ribosomal protein uL23 family. In terms of assembly, part of the 50S ribosomal subunit. Contacts protein L29, and trigger factor when it is bound to the ribosome.

Functionally, one of the early assembly proteins it binds 23S rRNA. One of the proteins that surrounds the polypeptide exit tunnel on the outside of the ribosome. Forms the main docking site for trigger factor binding to the ribosome. In Rickettsia rickettsii (strain Iowa), this protein is Large ribosomal subunit protein uL23.